The chain runs to 475 residues: Ribulose bisphosphate carboxylase large chain (475 aa).

Positions 1–2 (MS) are excised as a propeptide. N-acetylproline is present on P3. N6,N6,N6-trimethyllysine is present on K14. Substrate-binding residues include N123 and T173. K175 serves as the catalytic Proton acceptor. K177 lines the substrate pocket. Mg(2+) is bound by residues K201, D203, and E204. K201 bears the N6-carboxylysine mark. The Proton acceptor role is filled by H294. Residues R295, H327, and S379 each coordinate substrate.

Belongs to the RuBisCO large chain family. Type I subfamily. In terms of assembly, heterohexadecamer of 8 large chains and 8 small chains; disulfide-linked. The disulfide link is formed within the large subunit homodimers. It depends on Mg(2+) as a cofactor. Post-translationally, the disulfide bond which can form in the large chain dimeric partners within the hexadecamer appears to be associated with oxidative stress and protein turnover.

The protein localises to the plastid. It is found in the chloroplast. The enzyme catalyses 2 (2R)-3-phosphoglycerate + 2 H(+) = D-ribulose 1,5-bisphosphate + CO2 + H2O. It catalyses the reaction D-ribulose 1,5-bisphosphate + O2 = 2-phosphoglycolate + (2R)-3-phosphoglycerate + 2 H(+). Its function is as follows. RuBisCO catalyzes two reactions: the carboxylation of D-ribulose 1,5-bisphosphate, the primary event in carbon dioxide fixation, as well as the oxidative fragmentation of the pentose substrate in the photorespiration process. Both reactions occur simultaneously and in competition at the same active site. This is Ribulose bisphosphate carboxylase large chain from Physcomitrium patens (Spreading-leaved earth moss).